A 318-amino-acid polypeptide reads, in one-letter code: Ubiquinone biosynthesis protein COQ9, mitochondrial (318 aa).

The N-terminal 44 residues, 1 to 44, are a transit peptide targeting the mitochondrion; the sequence is MAAAAVSGALGRAGWRLLQLRCLPVARCRQALVPRAFHASAVGL. The SIFI-degron motif lies at 16–31; it reads RLLQLRCLPVARCRQA. The tract at residues 44–98 is disordered; the sequence is LRSSDEQKQQPPNSFSQQHSETQGAEKPDPESSHSPPRYTDQGGEEEEDYESEEQ. Polar residues predominate over residues 52 to 66; the sequence is QQPPNSFSQQHSETQ. Positions 86-97 are enriched in acidic residues; that stretch reads GGEEEEDYESEE. K175 is subject to N6-acetyllysine. R244 is an a 1,2-diacylglycero-3-phosphoethanolamine binding site.

It belongs to the COQ9 family. As to quaternary structure, homodimer. Heterodimer; two heterodimers of COQ7:COQ9 come together on the same side of the lipid pseudo-bilayer and form a curved tetramer with a hydrophobic surface suitable for membrane interaction. These two tetramers assemble into a soluble octamer with a pseudo-bilayer of lipids captured within. Interacts with COQ7; this interaction allows ubiquinone (CoQ) isoprene intermediates presentation to COQ7 and facilitates the COQ7-mediated hydroxylase step. Post-translationally, in response to mitochondrial stress, the precursor protein is ubiquitinated by the SIFI complex in the cytoplasm before mitochondrial import, leading to its degradation. Within the SIFI complex, UBR4 initiates ubiquitin chain that are further elongated or branched by KCMF1.

It is found in the mitochondrion. Its pathway is cofactor biosynthesis; ubiquinone biosynthesis. Membrane-associated protein that warps the membrane surface to access and bind aromatic isoprenes with high specificity, including ubiquinone (CoQ) isoprene intermediates and presents them directly to COQ7, therefore facilitating the COQ7-mediated hydroxylase step. Participates in the biosynthesis of coenzyme Q, also named ubiquinone, an essential lipid-soluble electron transporter for aerobic cellular respiration. The chain is Ubiquinone biosynthesis protein COQ9, mitochondrial from Homo sapiens (Human).